A 545-amino-acid chain; its full sequence is T-complex protein 1 subunit gamma (545 aa).

M1 carries the N-acetylmethionine modification. The segment at 1 to 24 is disordered; sequence MMGHRPVLVLSQNTKRESGRKVQS. Phosphoserine is present on S11. K15 participates in a covalent cross-link: Glycyl lysine isopeptide (Lys-Gly) (interchain with G-Cter in SUMO2). An ADP-binding site is contributed by G42. G42 contacts ATP. D93 serves as a coordination point for Mg(2+). 6 residues coordinate ADP: G94, T95, T96, S97, T162, and K163. G94, T95, and T96 together coordinate ATP. S170 carries the post-translational modification Phosphoserine. K222 carries the N6-acetyllysine modification. 2 positions are modified to phosphoserine: S243 and S244. At Y247 the chain carries Phosphotyrosine. Glycyl lysine isopeptide (Lys-Gly) (interchain with G-Cter in SUMO2) cross-links involve residues K248 and K249. Position 252 is a phosphoserine (S252). C366 and C372 are joined by a disulfide. Residue K381 forms a Glycyl lysine isopeptide (Lys-Gly) (interchain with G-Cter in SUMO2) linkage. G411 contributes to the ADP binding site. G411 is an ATP binding site. Phosphothreonine is present on residues T430 and T459. G482, E483, E497, and K502 together coordinate ADP. Residue G482 coordinates ATP. E497 is an ATP binding site. A disordered region spans residues 526 to 545; it reads HKKKGDDQSRQGGAPDAGQE.

The protein belongs to the TCP-1 chaperonin family. In terms of assembly, component of the chaperonin-containing T-complex (TRiC), a hexadecamer composed of two identical back-to-back stacked rings enclosing a protein folding chamber. Each ring is made up of eight different subunits: TCP1/CCT1, CCT2, CCT3, CCT4, CCT5, CCT6A/CCT6, CCT7, CCT8. Interacts with PACRG. Interacts with DNAAF4. Interacts with DLEC1.

The protein localises to the cytoplasm. It carries out the reaction ATP + H2O = ADP + phosphate + H(+). Component of the chaperonin-containing T-complex (TRiC), a molecular chaperone complex that assists the folding of actin, tubulin and other proteins upon ATP hydrolysis. The TRiC complex mediates the folding of WRAP53/TCAB1, thereby regulating telomere maintenance. As part of the TRiC complex may play a role in the assembly of BBSome, a complex involved in ciliogenesis regulating transports vesicles to the cilia. The protein is T-complex protein 1 subunit gamma (CCT3) of Homo sapiens (Human).